A 350-amino-acid chain; its full sequence is Patr class I histocompatibility antigen, alpha chain E (350 aa).

Positions 1–21 (MVDGTLLLLLSEALALTQTWA) are cleaved as a signal peptide. An alpha-1 region spans residues 22 to 111 (GSHSLKYFHT…LRGYYNQSEA (90 aa)). Over 22–305 (GSHSLKYFHT…KPASQPTIPI (284 aa)) the chain is Extracellular. The N-linked (GlcNAc...) asparagine glycan is linked to asparagine 107. The alpha-2 stretch occupies residues 112-203 (GSHTLQWMHG…EKGKETLLHL (92 aa)). 2 disulfides stabilise this stretch: cysteine 122-cysteine 185 and cysteine 224-cysteine 280. Residues 204–295 (EPPKTHVTHH…GLPEPLTLRW (92 aa)) form an alpha-3 region. In terms of domain architecture, Ig-like C1-type spans 206–294 (PKTHVTHHPI…EGLPEPLTLR (89 aa)). The segment at 296 to 305 (KPASQPTIPI) is connecting peptide. Residues 306 to 329 (VGIIAGLVLLGSVVSGAVVAAVMW) form a helical membrane-spanning segment. Residues 330–350 (RKKSSGGKGRSYSKAEWSDSA) lie on the Cytoplasmic side of the membrane.

This sequence belongs to the MHC class I family. As to quaternary structure, heterodimer of an alpha chain and a beta chain (beta-2-microglobulin).

The protein resides in the membrane. Preferably binds to a peptide derived from the signal sequence of most HLA-A, -B, -C and -G molecules. This chain is Patr class I histocompatibility antigen, alpha chain E (Patr-E), found in Pan troglodytes (Chimpanzee).